The chain runs to 215 residues: Cytochrome b6 (215 aa).

A helical transmembrane segment spans residues 32 to 52 (IFYCLGGITLTCFLVQVATGF). Residue C35 participates in heme c binding. Positions 86 and 100 each coordinate heme b. 3 helical membrane-spanning segments follow: residues 90–110 (ASMMVLMMILHVFRVYLTGGF), 116–136 (LTWVTGVVLAVLTASFGVTGY), and 186–206 (LHTFVLPLLTAVFMLMHFPMI). Heme b is bound by residues H187 and H202.

The protein belongs to the cytochrome b family. PetB subfamily. In terms of assembly, the 4 large subunits of the cytochrome b6-f complex are cytochrome b6, subunit IV (17 kDa polypeptide, PetD), cytochrome f and the Rieske protein, while the 4 small subunits are PetG, PetL, PetM and PetN. The complex functions as a dimer. Heme b serves as cofactor. Heme c is required as a cofactor.

The protein localises to the plastid. It localises to the chloroplast thylakoid membrane. Component of the cytochrome b6-f complex, which mediates electron transfer between photosystem II (PSII) and photosystem I (PSI), cyclic electron flow around PSI, and state transitions. This is Cytochrome b6 from Nicotiana tomentosiformis (Tobacco).